A 130-amino-acid polypeptide reads, in one-letter code: Small ribosomal subunit protein uS8A (130 aa).

The protein belongs to the universal ribosomal protein uS8 family. Component of the small ribosomal subunit (SSU). Mature yeast ribosomes consist of a small (40S) and a large (60S) subunit. The 40S small subunit contains 1 molecule of ribosomal RNA (18S rRNA) and 33 different proteins (encoded by 57 genes). The large 60S subunit contains 3 rRNA molecules (25S, 5.8S and 5S rRNA) and 46 different proteins (encoded by 81 genes).

It is found in the cytoplasm. Functionally, component of the ribosome, a large ribonucleoprotein complex responsible for the synthesis of proteins in the cell. The small ribosomal subunit (SSU) binds messenger RNAs (mRNAs) and translates the encoded message by selecting cognate aminoacyl-transfer RNA (tRNA) molecules. The large subunit (LSU) contains the ribosomal catalytic site termed the peptidyl transferase center (PTC), which catalyzes the formation of peptide bonds, thereby polymerizing the amino acids delivered by tRNAs into a polypeptide chain. The nascent polypeptides leave the ribosome through a tunnel in the LSU and interact with protein factors that function in enzymatic processing, targeting, and the membrane insertion of nascent chains at the exit of the ribosomal tunnel. This is Small ribosomal subunit protein uS8A from Saccharomyces cerevisiae (strain ATCC 204508 / S288c) (Baker's yeast).